The chain runs to 622 residues: Protein FAM234B (622 aa).

Positions 1 to 68 (MATVLSRALK…EPDSDAEVAE (68 aa)) are disordered. Ser16 carries the post-translational modification Phosphoserine. Thr26 carries the post-translational modification Phosphothreonine. Residues Ser30, Ser33, and Ser62 each carry the phosphoserine modification. Residues 104–124 (TSVFLLTLGISMILVLLCAFL) traverse the membrane as a helical segment.

It belongs to the FAM234 family.

The protein localises to the membrane. Its subcellular location is the golgi outpost. It localises to the cytoplasm. The protein resides in the cytoskeleton. It is found in the microtubule organizing center. The protein is Protein FAM234B of Homo sapiens (Human).